We begin with the raw amino-acid sequence, 901 residues long: Protein translocase subunit SecA (901 aa).

ATP contacts are provided by residues Gln-87, 105 to 109, and Asp-512; that span reads GEGKT. Cys-885, Cys-887, Cys-896, and His-897 together coordinate Zn(2+).

The protein belongs to the SecA family. As to quaternary structure, monomer and homodimer. Part of the essential Sec protein translocation apparatus which comprises SecA, SecYEG and auxiliary proteins SecDF-YajC and YidC. It depends on Zn(2+) as a cofactor.

The protein resides in the cell inner membrane. It is found in the cytoplasm. It catalyses the reaction ATP + H2O + cellular proteinSide 1 = ADP + phosphate + cellular proteinSide 2.. Part of the Sec protein translocase complex. Interacts with the SecYEG preprotein conducting channel. Has a central role in coupling the hydrolysis of ATP to the transfer of proteins into and across the cell membrane, serving both as a receptor for the preprotein-SecB complex and as an ATP-driven molecular motor driving the stepwise translocation of polypeptide chains across the membrane. This Salmonella enteritidis PT4 (strain P125109) protein is Protein translocase subunit SecA.